We begin with the raw amino-acid sequence, 987 residues long: MATTSEINNDLSFSVVSIVEDVLQQHSSRSSDVGLVSRKVEESSLRRYEAAGWLRDMIGVSNGKDFPGEPSEEEFRLGLRSGIVLCNVLNKVNPGSVSKVVEAPDDVADGAALSAFQYFENIRNFLVAIEEMGLPSFEASDMEKGGKSIRIVNCILALKSYSEWKLKGENGPWRYGSNMKHNFGSRKLFLRKSSEPFVSSISRTQSTDMLSTDQPLSSDGDSRSINGLVRSFIADRKHEDIPNVVESVLNKVMEEVQQRLSIHNEMMKSSSKPIPEDDSSCETVVRSQLCDARQHEEAEENSPPQVVEKKFQRTNFEHHEEQKILLNQQKHIQELKQTLYTTKAGMKLLQMKYQEDFFHLGKHLNGLAYAATGYKRVLEENRKLYNLVQDLKGNIRVYCRVRPFLPGQESGGLSAVEDIDEGTITIRVPSKYGKAGQKPFMFNKVFGPSATQEEVFSDMQPLVRSVLDGYNVCIFAYGQTGSGKTFTMTGPKELTEESLGVNYRALADLFLLSNQRKDTTSYEISVQMLEIYNEQVRDLLAQDGQTKRLEIRNNSHNGINVPEASLVPVSSTDDVIQLMDLGHMNRAVSSTAMNDRSSRSHSCVTVHVQGRDLTSGSILHGSMHLVDLAGSERVDKSEVTGDRLKEAQHINKSLSALGDVISSLSQKTSHVPYRNSKLTQLLQDSLGGSAKTLMFVHISPEPDTLGETISTLKFAERVGSVELGAARVNKDNSEVKELKEQIANLKMALVRKGNGNDVQPTAIPINRERISRRRSLETPTIRPKLPTMGNTSNNSRPQIMDLSGPEAFNDSTASSRRHSLDIHELMKSSSPAWPRQPLNGKDEDRESKSGEWIDKHEELIQNQNPNSPEQFYQSMVPQQQSLYGGKQDFEVQSITDNESDEAATSDCSDSDLLWRLSVQVNVPKVSNIQNSANPKPKKIQPRTAKLSETRSLIPSLIPAPSKRPPNTVNSQPQRPTRDGKRRLSLGT.

The Calponin-homology (CH) domain maps to 44–163 (SLRRYEAAGW…CILALKSYSE (120 aa)). The tract at residues 201–221 (ISRTQSTDMLSTDQPLSSDGD) is disordered. The Kinesin motor domain occupies 394-721 (NIRVYCRVRP…LKFAERVGSV (328 aa)). An ATP-binding site is contributed by 478–485 (GQTGSGKT). Residues 725–754 (AARVNKDNSEVKELKEQIANLKMALVRKGN) are a coiled coil. 2 disordered regions span residues 759 to 849 (QPTA…ESKS) and 927 to 987 (NIQN…SLGT). The segment covering 788–797 (MGNTSNNSRP) has biased composition (polar residues). The span at 840-849 (GKDEDRESKS) shows a compositional bias: basic and acidic residues. Positions 964–974 (PPNTVNSQPQR) are enriched in polar residues.

The protein belongs to the TRAFAC class myosin-kinesin ATPase superfamily. Kinesin family. KIN-14 subfamily. In terms of assembly, monomer. In terms of tissue distribution, flower specific.

The protein resides in the cytoplasm. It localises to the cytoskeleton. Microtubule-binding motor protein. The protein is Kinesin-like protein KIN-14G of Arabidopsis thaliana (Mouse-ear cress).